The primary structure comprises 648 residues: Transcription initiation factor TFIID subunit 5 (648 aa).

Low complexity predominate over residues 1–13 (MDSENSSSHSISS). The interval 1 to 21 (MDSENSSSHSISSPQMFQNTH) is disordered. The LisH domain occupies 35 to 67 (MNNESLQMIIGYLRRNGLTETEELLTREAGPVL). WD repeat units follow at residues 317–358 (NAPI…KKLR), 392–431 (GHGG…NAVI), 433–472 (RTPA…PLRI), 475–514 (DPYG…RVRI), 517–556 (GHKA…LVAA), and 560–599 (EQAG…GTVL).

It belongs to the WD repeat TAF5 family. Component of the TFIID basal transcription factor complex, composed of TATA-box-binding protein tbp-1, and a number of TBP-associated factors (TAFs).

The protein localises to the nucleus. The TFIID basal transcription factor complex plays a major role in the initiation of RNA polymerase II (Pol II)-dependent transcription. TFIID recognizes and binds promoters via its subunit tbp-1, a TATA-box-binding protein, and promotes assembly of the pre-initiation complex (PIC). The TFIID complex consists of tbp-1 and TBP-associated factors (TAFs), including taf-5. Essential for early embryonic development, but not required for transcription of some genes; probably acts via activating transcription initiation by RNA Pol II, as part of the TFIID complex. The protein is Transcription initiation factor TFIID subunit 5 of Caenorhabditis elegans.